Reading from the N-terminus, the 87-residue chain is Serine protease inhibitor Kazal-type 12 (87 aa).

The N-terminal stretch at 1–22 (MKPAGAFLLLISLACLFLSVDA) is a signal peptide. The region spanning 26–87 (GGFQAFCSNY…KLGFKHEGKC (62 aa)) is the Kazal-like domain. 3 disulfide bridges follow: cysteine 32–cysteine 68, cysteine 46–cysteine 65, and cysteine 54–cysteine 87.

As to expression, expressed in epydiymis, in the caput.

It localises to the secreted. In terms of biological role, inhibits trypsin. The polypeptide is Serine protease inhibitor Kazal-type 12 (Spink12) (Mus musculus (Mouse)).